We begin with the raw amino-acid sequence, 91 residues long: ATP synthase subunit c (91 aa).

Transmembrane regions (helical) follow at residues 4 to 24 (FTMCMLAAGFGMAIGAFGTGI) and 53 to 73 (IGLAMIESLAIYVLVVCLIIL).

The protein belongs to the ATPase C chain family. As to quaternary structure, F-type ATPases have 2 components, F(1) - the catalytic core - and F(0) - the membrane proton channel. F(1) has five subunits: alpha(3), beta(3), gamma(1), delta(1), epsilon(1). F(0) has three main subunits: a(1), b(2) and c(10-14). The alpha and beta chains form an alternating ring which encloses part of the gamma chain. F(1) is attached to F(0) by a central stalk formed by the gamma and epsilon chains, while a peripheral stalk is formed by the delta and b chains.

Its subcellular location is the cell inner membrane. Its function is as follows. F(1)F(0) ATP synthase produces ATP from ADP in the presence of a proton or sodium gradient. F-type ATPases consist of two structural domains, F(1) containing the extramembraneous catalytic core and F(0) containing the membrane proton channel, linked together by a central stalk and a peripheral stalk. During catalysis, ATP synthesis in the catalytic domain of F(1) is coupled via a rotary mechanism of the central stalk subunits to proton translocation. In terms of biological role, key component of the F(0) channel; it plays a direct role in translocation across the membrane. A homomeric c-ring of between 10-14 subunits forms the central stalk rotor element with the F(1) delta and epsilon subunits. The chain is ATP synthase subunit c from Trichlorobacter lovleyi (strain ATCC BAA-1151 / DSM 17278 / SZ) (Geobacter lovleyi).